We begin with the raw amino-acid sequence, 482 residues long: Altronate oxidoreductase (482 aa).

18 to 29 (IIQFGEGNFLRA) serves as a coordination point for NAD(+).

Belongs to the mannitol dehydrogenase family. UxaB subfamily.

The catalysed reaction is D-altronate + NAD(+) = keto-D-tagaturonate + NADH + H(+). The protein operates within carbohydrate metabolism; pentose and glucuronate interconversion. This chain is Altronate oxidoreductase, found in Shigella sonnei (strain Ss046).